The sequence spans 194 residues: PPE family protein PPE41 (194 aa).

It belongs to the mycobacterial PPE family. As to quaternary structure, forms a heterodimer with PE25. The dimer forms a 1:1:1 heterotrimeric complex with EspG5. PPE41 interacts directly with EspG5.

It localises to the secreted. The protein resides in the cell surface. Functionally, the PE25/PPE41 dimer induces both a strong humoral and cellular immune response. The dimer induces necrosis, but not apoptosis, in mouse macrophage cells. It also induces activation and maturation of mouse dendritic cells and drives Th2-biased immune responses. The chain is PPE family protein PPE41 from Mycobacterium tuberculosis (strain ATCC 25618 / H37Rv).